A 212-amino-acid polypeptide reads, in one-letter code: Ribonuclease HII (212 aa).

Residues 19-212 (CIIVGVDEVG…SKISYMFKNS (194 aa)) form the RNase H type-2 domain. A divalent metal cation is bound by residues Asp-25, Glu-26, and Asp-120.

It belongs to the RNase HII family. Mn(2+) is required as a cofactor. Mg(2+) serves as cofactor.

The protein localises to the cytoplasm. It carries out the reaction Endonucleolytic cleavage to 5'-phosphomonoester.. Its function is as follows. Endonuclease that specifically degrades the RNA of RNA-DNA hybrids. This chain is Ribonuclease HII, found in Ehrlichia ruminantium (strain Welgevonden).